A 447-amino-acid chain; its full sequence is Phosphoglucosamine mutase (447 aa).

Residue serine 103 is the Phosphoserine intermediate of the active site. Residues serine 103, aspartate 242, aspartate 244, and aspartate 246 each coordinate Mg(2+). A Phosphoserine modification is found at serine 103.

The protein belongs to the phosphohexose mutase family. The cofactor is Mg(2+). In terms of processing, activated by phosphorylation.

It catalyses the reaction alpha-D-glucosamine 1-phosphate = D-glucosamine 6-phosphate. Functionally, catalyzes the conversion of glucosamine-6-phosphate to glucosamine-1-phosphate. This chain is Phosphoglucosamine mutase, found in Marinobacter nauticus (strain ATCC 700491 / DSM 11845 / VT8) (Marinobacter aquaeolei).